The chain runs to 404 residues: Acetate kinase (404 aa).

Residue Asn8 coordinates Mg(2+). Lys15 contacts ATP. Arg92 lines the substrate pocket. Asp149 acts as the Proton donor/acceptor in catalysis. Residues 207–211 (HLGSG), 282–284 (DMR), and 327–331 (GIGEN) each bind ATP. Glu378 is a binding site for Mg(2+).

Belongs to the acetokinase family. Homodimer. Mg(2+) is required as a cofactor. Requires Mn(2+) as cofactor.

Its subcellular location is the cytoplasm. The catalysed reaction is acetate + ATP = acetyl phosphate + ADP. It participates in metabolic intermediate biosynthesis; acetyl-CoA biosynthesis; acetyl-CoA from acetate: step 1/2. In terms of biological role, catalyzes the formation of acetyl phosphate from acetate and ATP. Can also catalyze the reverse reaction. This is Acetate kinase from Nitrobacter hamburgensis (strain DSM 10229 / NCIMB 13809 / X14).